The following is a 204-amino-acid chain: COBRA-like protein 5 (204 aa).

The N-terminal stretch at 1-24 is a signal peptide; the sequence is MESLFSTMIVLLLVSFSCLISTEA. N-linked (GlcNAc...) asparagine glycosylation is found at Asn-31 and Asn-195.

Belongs to the COBRA family. Expressed in roots, stems, leaves, flowers and siliques.

This chain is COBRA-like protein 5 (COBL5), found in Arabidopsis thaliana (Mouse-ear cress).